Consider the following 458-residue polypeptide: Argininosuccinate lyase (458 aa).

This sequence belongs to the lyase 1 family. Argininosuccinate lyase subfamily.

The protein localises to the cytoplasm. The enzyme catalyses 2-(N(omega)-L-arginino)succinate = fumarate + L-arginine. It functions in the pathway amino-acid biosynthesis; L-arginine biosynthesis; L-arginine from L-ornithine and carbamoyl phosphate: step 3/3. The polypeptide is Argininosuccinate lyase (Salmonella schwarzengrund (strain CVM19633)).